Consider the following 91-residue polypeptide: Small ribosomal subunit protein uS19 (91 aa).

The protein belongs to the universal ribosomal protein uS19 family.

In terms of biological role, protein S19 forms a complex with S13 that binds strongly to the 16S ribosomal RNA. The sequence is that of Small ribosomal subunit protein uS19 from Sulfurimonas denitrificans (strain ATCC 33889 / DSM 1251) (Thiomicrospira denitrificans (strain ATCC 33889 / DSM 1251)).